We begin with the raw amino-acid sequence, 336 residues long: Protease HtpX homolog (336 aa).

2 helical membrane-spanning segments follow: residues 7–24 and 29–48; these read AMLLAAMTALFMGVGFLI and GMMIALLIAAGTNLFSYWNA. His130 serves as a coordination point for Zn(2+). Glu131 is a catalytic residue. Residue His134 participates in Zn(2+) binding. The next 2 helical transmembrane spans lie at 145 to 165 and 171 to 191; these read IVATFAGAISMLGNFAFFLGG and PFGFVGVLAAMIVAPFAAMIV. Residue Glu200 participates in Zn(2+) binding. A compositionally biased stretch (low complexity) spans 278–287; sequence QQMAGGTQAA. A disordered region spans residues 278 to 336; it reads QQMAGGTQAAPRPTPRQAGEQQPSGPWGQAPQAEQPAEPERPKANPWGRNPTGPKGRWS.

It belongs to the peptidase M48B family. Zn(2+) serves as cofactor.

The protein resides in the cell inner membrane. In Mesorhizobium japonicum (strain LMG 29417 / CECT 9101 / MAFF 303099) (Mesorhizobium loti (strain MAFF 303099)), this protein is Protease HtpX homolog.